Reading from the N-terminus, the 166-residue chain is Large ribosomal subunit protein uL10 (166 aa).

Belongs to the universal ribosomal protein uL10 family. In terms of assembly, part of the ribosomal stalk of the 50S ribosomal subunit. The N-terminus interacts with L11 and the large rRNA to form the base of the stalk. The C-terminus forms an elongated spine to which L12 dimers bind in a sequential fashion forming a multimeric L10(L12)X complex.

Its function is as follows. Forms part of the ribosomal stalk, playing a central role in the interaction of the ribosome with GTP-bound translation factors. The sequence is that of Large ribosomal subunit protein uL10 from Staphylococcus aureus (strain JH1).